The chain runs to 198 residues: 7-methyl-GTP pyrophosphatase (198 aa).

The Proton acceptor role is filled by aspartate 75.

The protein belongs to the Maf family. YceF subfamily. A divalent metal cation is required as a cofactor.

It is found in the cytoplasm. It carries out the reaction N(7)-methyl-GTP + H2O = N(7)-methyl-GMP + diphosphate + H(+). In terms of biological role, nucleoside triphosphate pyrophosphatase that hydrolyzes 7-methyl-GTP (m(7)GTP). May have a dual role in cell division arrest and in preventing the incorporation of modified nucleotides into cellular nucleic acids. This Bartonella quintana (strain Toulouse) (Rochalimaea quintana) protein is 7-methyl-GTP pyrophosphatase.